A 433-amino-acid polypeptide reads, in one-letter code: Enolase (433 aa).

Position 167 (Q167) interacts with (2R)-2-phosphoglycerate. E209 acts as the Proton donor in catalysis. The Mg(2+) site is built by D246, E291, and D318. Residues K343, R372, S373, and K394 each contribute to the (2R)-2-phosphoglycerate site. The active-site Proton acceptor is the K343.

The protein belongs to the enolase family. Component of the RNA degradosome, a multiprotein complex involved in RNA processing and mRNA degradation. Mg(2+) is required as a cofactor.

Its subcellular location is the cytoplasm. It is found in the secreted. The protein resides in the cell surface. It carries out the reaction (2R)-2-phosphoglycerate = phosphoenolpyruvate + H2O. It functions in the pathway carbohydrate degradation; glycolysis; pyruvate from D-glyceraldehyde 3-phosphate: step 4/5. Catalyzes the reversible conversion of 2-phosphoglycerate (2-PG) into phosphoenolpyruvate (PEP). It is essential for the degradation of carbohydrates via glycolysis. In Photorhabdus laumondii subsp. laumondii (strain DSM 15139 / CIP 105565 / TT01) (Photorhabdus luminescens subsp. laumondii), this protein is Enolase.